The following is a 289-amino-acid chain: GTPase Era (289 aa).

The Era-type G domain maps to 2 to 167 (KSGFISLIGR…LDEIYKYLPE (166 aa)). The segment at 10 to 17 (GRTNAGKS) is G1. A GTP-binding site is contributed by 10–17 (GRTNAGKS). The tract at residues 36–40 (NATRR) is G2. Positions 57–60 (DTPG) are G3. Residues 57 to 61 (DTPGL) and 116 to 119 (TKID) contribute to the GTP site. The G4 stretch occupies residues 116-119 (TKID). The tract at residues 146 to 148 (LSV) is G5. The KH type-2 domain occupies 198–274 (VSDEVPYSTD…FLKINVKIDK (77 aa)).

Belongs to the TRAFAC class TrmE-Era-EngA-EngB-Septin-like GTPase superfamily. Era GTPase family. As to quaternary structure, monomer.

The protein resides in the cytoplasm. Its subcellular location is the cell inner membrane. Its function is as follows. An essential GTPase that binds both GDP and GTP, with rapid nucleotide exchange. Plays a role in 16S rRNA processing and 30S ribosomal subunit biogenesis and possibly also in cell cycle regulation and energy metabolism. This is GTPase Era from Campylobacter fetus subsp. fetus (strain 82-40).